We begin with the raw amino-acid sequence, 263 residues long: Small ribosomal subunit protein eS4 (263 aa).

Residues 42–104 enclose the S4 RNA-binding domain; that stretch reads LPLIIFLRNR…TGEHFRLVYD (63 aa).

This sequence belongs to the eukaryotic ribosomal protein eS4 family. Component of the small ribosomal subunit.

Its subcellular location is the cytoplasm. Its function is as follows. Component of the small ribosomal subunit. The ribosome is a large ribonucleoprotein complex responsible for the synthesis of proteins in the cell. The sequence is that of Small ribosomal subunit protein eS4 (rps4) from Xenopus tropicalis (Western clawed frog).